A 479-amino-acid polypeptide reads, in one-letter code: Alpha,alpha-trehalose-phosphate synthase [UDP-forming] 2 (479 aa).

Positions 96 and 150 each coordinate D-glucose 6-phosphate. UDP is bound by residues Arg-287 and Lys-292. Residues Arg-287 and Lys-292 each coordinate UDP-alpha-D-glucose. Position 325 (Arg-325) interacts with D-glucose 6-phosphate. UDP is bound by residues 363–364 (SV) and 390–394 (LVSFE). 386 to 394 (DGMNLVSFE) provides a ligand contact to UDP-alpha-D-glucose.

Belongs to the glycosyltransferase 20 family.

It carries out the reaction D-glucose 6-phosphate + UDP-alpha-D-glucose = alpha,alpha-trehalose 6-phosphate + UDP + H(+). The protein operates within carbohydrate biosynthesis. Its function is as follows. Synthase catalytic subunit of the trehalose synthase complex that catalyzes the production of trehalose from glucose-6-phosphate and UDP-alpha-D-glucose in a two step process. The disaccharide trehalose serves as a storage carbohydrate that is mobilized during conidial germination. Regulates the level of trehalose as a protectant for cell integrity during thermal and oxidative stress. The chain is Alpha,alpha-trehalose-phosphate synthase [UDP-forming] 2 from Aspergillus fumigatus (strain ATCC MYA-4609 / CBS 101355 / FGSC A1100 / Af293) (Neosartorya fumigata).